A 171-amino-acid chain; its full sequence is MVKLNSNPGEKGAKPPSVEDGFQTVPLITPLEVNHLQLAAPEKVIVKTRTEYQPEQRNKGKFRVPKIAEFTVTILVSLALAFLACIVFLVVYKAFTYDHSCPEGFVYKHKRCIPASLDAYYSSQDPSSRSRFYTVISHYSVAKQSTARAIGPWLSAAAVIHEPKPPKTQGH.

A disordered region spans residues 1 to 21 (MVKLNSNPGEKGAKPPSVEDG). At 1–71 (MVKLNSNPGE…FRVPKIAEFT (71 aa)) the chain is on the cytoplasmic side. A helical; Signal-anchor for type II membrane protein membrane pass occupies residues 72–92 (VTILVSLALAFLACIVFLVVY). Topologically, residues 93-171 (KAFTYDHSCP…EPKPPKTQGH (79 aa)) are lumenal.

This sequence belongs to the NSG family. Specifically expressed in neural and neuroendocrine tissues. Pituitary and less in adrenal gland and testis. Expressed in the hippocampus throughout development. Remains enriched in layer V cortical neurons during development. At P0, broadly expressed in the neocortex. Is down-regulated overall at P8 and P14, but remains relatively enriched in layer V. At P0 is lower expressed in the cerebellum. Expression remains low throughout development, and is undetectable by adulthood.

Its subcellular location is the membrane. It localises to the golgi apparatus. It is found in the trans-Golgi network membrane. The protein localises to the cell projection. The protein resides in the dendrite. Its subcellular location is the endosome membrane. It localises to the early endosome membrane. It is found in the late endosome membrane. The protein localises to the lysosome lumen. The protein resides in the cytoplasmic vesicle membrane. Its subcellular location is the golgi stack membrane. It localises to the endosome. It is found in the multivesicular body membrane. The protein is Neuronal vesicle trafficking-associated protein 2 of Mus musculus (Mouse).